Reading from the N-terminus, the 485-residue chain is Poly(ADP-ribose) glycohydrolase 2 (485 aa).

The protein belongs to the poly(ADP-ribose) glycohydrolase family. In terms of tissue distribution, expressed in head and tail neurons.

The protein localises to the cytoplasm. It carries out the reaction [(1''-&gt;2')-ADP-alpha-D-ribose](n) + H2O = [(1''-&gt;2')-ADP-alpha-D-ribose](n-1) + ADP-D-ribose. Functionally, poly(ADP-ribose) synthesized after DNA damage is only present transiently and is rapidly degraded by poly(ADP-ribose) glycohydrolase. Poly(ADP-ribose) metabolism may be required for maintenance of the normal function of neuronal cells. The protein is Poly(ADP-ribose) glycohydrolase 2 of Caenorhabditis elegans.